The sequence spans 187 residues: Adenylate kinase (187 aa).

10 to 15 (GSGKGT) contributes to the ATP binding site. Positions 30 to 59 (STGDLLRAEVAAGSPLGLKAKEVMARGDLV) are NMP. AMP-binding positions include Thr31, Arg36, 57-59 (DLV), 85-88 (GYPR), and Gln92. The LID stretch occupies residues 126-136 (GRAKAEGREDD). Arg127 is a binding site for ATP. Residues Arg133 and Arg144 each coordinate AMP. Position 172 (Gly172) interacts with ATP.

Belongs to the adenylate kinase family. Monomer.

The protein localises to the cytoplasm. It catalyses the reaction AMP + ATP = 2 ADP. It participates in purine metabolism; AMP biosynthesis via salvage pathway; AMP from ADP: step 1/1. Its function is as follows. Catalyzes the reversible transfer of the terminal phosphate group between ATP and AMP. Plays an important role in cellular energy homeostasis and in adenine nucleotide metabolism. This chain is Adenylate kinase, found in Xanthomonas axonopodis pv. citri (strain 306).